Consider the following 460-residue polypeptide: Argininosuccinate lyase (460 aa).

Belongs to the lyase 1 family. Argininosuccinate lyase subfamily.

The protein localises to the cytoplasm. The catalysed reaction is 2-(N(omega)-L-arginino)succinate = fumarate + L-arginine. It functions in the pathway amino-acid biosynthesis; L-arginine biosynthesis; L-arginine from L-ornithine and carbamoyl phosphate: step 3/3. The sequence is that of Argininosuccinate lyase from Parvibaculum lavamentivorans (strain DS-1 / DSM 13023 / NCIMB 13966).